Reading from the N-terminus, the 415-residue chain is Alpha-N-acetylgalactosaminidase (415 aa).

Residues 1 to 17 (MLQKTVLLLALVAQVLM) form the signal peptide. 3 disulfides stabilise this stretch: Cys38/Cys80, Cys42/Cys49, and Cys127/Cys158. Substrate is bound by residues 78-79 (DD) and Lys154. Residue Asp156 is the Nucleophile of the active site. Asn177 is a glycosylation site (N-linked (GlcNAc...) asparagine). A disulfide bridge links Cys187 with Cys209. Residue Ser188 participates in substrate binding. The N-linked (GlcNAc...) asparagine glycan is linked to Asn201. Substrate is bound by residues Arg213 and Asp217. Asp217 serves as the catalytic Proton donor. A phosphoserine mark is found at Ser322 and Ser332. Asn385 carries N-linked (GlcNAc...) asparagine glycosylation.

It belongs to the glycosyl hydrolase 27 family. Homodimer.

Its subcellular location is the lysosome. The enzyme catalyses Cleavage of non-reducing alpha-(1-&gt;3)-N-acetylgalactosamine residues from human blood group A and AB mucin glycoproteins, Forssman hapten and blood group A lacto series glycolipids.. The catalysed reaction is a neolactoside IV(3)-alpha-GalNAc,IV(2)-alpha-Fuc-nLc4Cer(d18:1(4E)) + H2O = a neolactoside IV(2)-alpha-Fuc-nLc4Cer(d18:1(4E)) + N-acetyl-alpha-D-galactosamine. It carries out the reaction a neolactoside IV(3)-alpha-GalNAc,IV(2)-alpha-Fuc-nLc4Cer(d18:0) + H2O = a neolactoside IV(2)-alpha-Fuc-nLc4Cer(d18:0) + N-acetyl-alpha-D-galactosamine. It catalyses the reaction a globoside IV3GalNAc-Gb4Cer + H2O = N-acetyl-alpha-D-galactosamine + a globoside Gb4Cer. Its function is as follows. Removes terminal alpha-N-acetylgalactosamine residues from glycolipids and glycopeptides. Required for the breakdown of glycolipids. The protein is Alpha-N-acetylgalactosaminidase (Naga) of Mus musculus (Mouse).